The chain runs to 227 residues: 7-cyano-7-deazaguanine synthase (227 aa).

Position 16-26 (16-26 (FSGGQDSTTCL)) interacts with ATP. 4 residues coordinate Zn(2+): Cys-194, Cys-202, Cys-205, and Cys-208.

Belongs to the QueC family. Zn(2+) is required as a cofactor.

It carries out the reaction 7-carboxy-7-deazaguanine + NH4(+) + ATP = 7-cyano-7-deazaguanine + ADP + phosphate + H2O + H(+). Its pathway is purine metabolism; 7-cyano-7-deazaguanine biosynthesis. In terms of biological role, catalyzes the ATP-dependent conversion of 7-carboxy-7-deazaguanine (CDG) to 7-cyano-7-deazaguanine (preQ(0)). This chain is 7-cyano-7-deazaguanine synthase, found in Haemophilus influenzae (strain PittEE).